Here is a 395-residue protein sequence, read N- to C-terminus: S-adenosylmethionine synthase (395 aa).

Histidine 15 provides a ligand contact to ATP. Aspartate 17 is a binding site for Mg(2+). Glutamate 43 is a binding site for K(+). Glutamine 99 serves as a coordination point for L-methionine. Residues 99–109 (QSPDIAMGVNE) are flexible loop. Residues 174-176 (DGK), 240-241 (RF), aspartate 249, 255-256 (RK), alanine 272, and lysine 276 contribute to the ATP site. Residue aspartate 249 participates in L-methionine binding. Position 280 (lysine 280) interacts with L-methionine.

The protein belongs to the AdoMet synthase family. In terms of assembly, homotetramer; dimer of dimers. Requires Mg(2+) as cofactor. The cofactor is K(+).

It localises to the cytoplasm. It catalyses the reaction L-methionine + ATP + H2O = S-adenosyl-L-methionine + phosphate + diphosphate. The protein operates within amino-acid biosynthesis; S-adenosyl-L-methionine biosynthesis; S-adenosyl-L-methionine from L-methionine: step 1/1. Its function is as follows. Catalyzes the formation of S-adenosylmethionine (AdoMet) from methionine and ATP. The overall synthetic reaction is composed of two sequential steps, AdoMet formation and the subsequent tripolyphosphate hydrolysis which occurs prior to release of AdoMet from the enzyme. The polypeptide is S-adenosylmethionine synthase (Moorella thermoacetica (strain ATCC 39073 / JCM 9320)).